We begin with the raw amino-acid sequence, 376 residues long: Glutamate 5-kinase (376 aa).

Lysine 15 serves as a coordination point for ATP. The substrate site is built by serine 55, aspartate 141, and asparagine 153. Residues 173–174 and 215–221 contribute to the ATP site; these read SD and TGGMQTK. The PUA domain occupies 280 to 361; the sequence is AGRLTVDAGA…HAIAEVLDEA (82 aa).

Belongs to the glutamate 5-kinase family.

The protein localises to the cytoplasm. It carries out the reaction L-glutamate + ATP = L-glutamyl 5-phosphate + ADP. The protein operates within amino-acid biosynthesis; L-proline biosynthesis; L-glutamate 5-semialdehyde from L-glutamate: step 1/2. Functionally, catalyzes the transfer of a phosphate group to glutamate to form L-glutamate 5-phosphate. This Salinibacter ruber (strain DSM 13855 / M31) protein is Glutamate 5-kinase.